Reading from the N-terminus, the 211-residue chain is Uracil phosphoribosyltransferase (211 aa).

30 to 34 (KGLVR) is a GTP binding site. 5-phospho-alpha-D-ribose 1-diphosphate is bound by residues R79, R104, and 133-141 (DPMLATGTT). Uracil contacts are provided by residues I197 and 202-204 (GDA). A 5-phospho-alpha-D-ribose 1-diphosphate-binding site is contributed by D203.

This sequence belongs to the UPRTase family. Mg(2+) serves as cofactor.

It carries out the reaction UMP + diphosphate = 5-phospho-alpha-D-ribose 1-diphosphate + uracil. It participates in pyrimidine metabolism; UMP biosynthesis via salvage pathway; UMP from uracil: step 1/1. With respect to regulation, allosterically activated by GTP. Functionally, catalyzes the conversion of uracil and 5-phospho-alpha-D-ribose 1-diphosphate (PRPP) to UMP and diphosphate. This is Uracil phosphoribosyltransferase from Pyrobaculum arsenaticum (strain DSM 13514 / JCM 11321 / PZ6).